The chain runs to 258 residues: Tryptophan synthase alpha chain (258 aa).

Active-site proton acceptor residues include Glu-47 and Asp-58.

Belongs to the TrpA family. As to quaternary structure, tetramer of two alpha and two beta chains.

The enzyme catalyses (1S,2R)-1-C-(indol-3-yl)glycerol 3-phosphate + L-serine = D-glyceraldehyde 3-phosphate + L-tryptophan + H2O. Its pathway is amino-acid biosynthesis; L-tryptophan biosynthesis; L-tryptophan from chorismate: step 5/5. In terms of biological role, the alpha subunit is responsible for the aldol cleavage of indoleglycerol phosphate to indole and glyceraldehyde 3-phosphate. The protein is Tryptophan synthase alpha chain of Bacillus cereus (strain G9842).